A 201-amino-acid polypeptide reads, in one-letter code: FMN-dependent NADH:quinone oxidoreductase (201 aa).

FMN is bound by residues Ser10, 16-18 (SQS), 96-99 (MYNF), and 140-143 (SRGG).

This sequence belongs to the azoreductase type 1 family. In terms of assembly, homodimer. The cofactor is FMN.

The enzyme catalyses 2 a quinone + NADH + H(+) = 2 a 1,4-benzosemiquinone + NAD(+). It carries out the reaction N,N-dimethyl-1,4-phenylenediamine + anthranilate + 2 NAD(+) = 2-(4-dimethylaminophenyl)diazenylbenzoate + 2 NADH + 2 H(+). In terms of biological role, quinone reductase that provides resistance to thiol-specific stress caused by electrophilic quinones. Its function is as follows. Also exhibits azoreductase activity. Catalyzes the reductive cleavage of the azo bond in aromatic azo compounds to the corresponding amines. This chain is FMN-dependent NADH:quinone oxidoreductase, found in Escherichia coli O9:H4 (strain HS).